The following is a 419-amino-acid chain: UDP-N-acetylglucosamine 1-carboxyvinyltransferase 2 (419 aa).

22 to 23 provides a ligand contact to phosphoenolpyruvate; sequence KN. A UDP-N-acetyl-alpha-D-glucosamine-binding site is contributed by R92. The active-site Proton donor is C116. At C116 the chain carries 2-(S-cysteinyl)pyruvic acid O-phosphothioketal. UDP-N-acetyl-alpha-D-glucosamine contacts are provided by residues 121-125, D306, and V328; that span reads RPIDL.

The protein belongs to the EPSP synthase family. MurA subfamily.

The protein resides in the cytoplasm. It carries out the reaction phosphoenolpyruvate + UDP-N-acetyl-alpha-D-glucosamine = UDP-N-acetyl-3-O-(1-carboxyvinyl)-alpha-D-glucosamine + phosphate. It participates in cell wall biogenesis; peptidoglycan biosynthesis. Functionally, cell wall formation. Adds enolpyruvyl to UDP-N-acetylglucosamine. The chain is UDP-N-acetylglucosamine 1-carboxyvinyltransferase 2 from Carboxydothermus hydrogenoformans (strain ATCC BAA-161 / DSM 6008 / Z-2901).